Here is a 290-residue protein sequence, read N- to C-terminus: Glycine--tRNA ligase alpha subunit (290 aa).

This sequence belongs to the class-II aminoacyl-tRNA synthetase family. As to quaternary structure, tetramer of two alpha and two beta subunits.

The protein localises to the cytoplasm. It catalyses the reaction tRNA(Gly) + glycine + ATP = glycyl-tRNA(Gly) + AMP + diphosphate. The sequence is that of Glycine--tRNA ligase alpha subunit from Desulfotalea psychrophila (strain LSv54 / DSM 12343).